Consider the following 355-residue polypeptide: tRNA-specific 2-thiouridylase MnmA (355 aa).

ATP contacts are provided by residues 7–14 (GLSGGVDS) and Leu33. Cys94 functions as the Nucleophile in the catalytic mechanism. An intrachain disulfide couples Cys94 to Cys193. Gly119 lines the ATP pocket. The interaction with tRNA stretch occupies residues 143-145 (KDQ). Catalysis depends on Cys193, which acts as the Cysteine persulfide intermediate. Residues 298–299 (RY) are interaction with tRNA.

The protein belongs to the MnmA/TRMU family.

The protein localises to the cytoplasm. The enzyme catalyses S-sulfanyl-L-cysteinyl-[protein] + uridine(34) in tRNA + AH2 + ATP = 2-thiouridine(34) in tRNA + L-cysteinyl-[protein] + A + AMP + diphosphate + H(+). In terms of biological role, catalyzes the 2-thiolation of uridine at the wobble position (U34) of tRNA, leading to the formation of s(2)U34. In Acaryochloris marina (strain MBIC 11017), this protein is tRNA-specific 2-thiouridylase MnmA.